Reading from the N-terminus, the 502-residue chain is Lysine--tRNA ligase (502 aa).

Mg(2+) contacts are provided by E412 and E419.

This sequence belongs to the class-II aminoacyl-tRNA synthetase family. In terms of assembly, homodimer. Mg(2+) is required as a cofactor.

Its subcellular location is the cytoplasm. It catalyses the reaction tRNA(Lys) + L-lysine + ATP = L-lysyl-tRNA(Lys) + AMP + diphosphate. The polypeptide is Lysine--tRNA ligase (Histophilus somni (strain 2336) (Haemophilus somnus)).